The primary structure comprises 173 residues: Photosystem I assembly protein Ycf3 (173 aa).

TPR repeat units lie at residues 35–68, 72–105, and 120–153; these read AYIY…EENA, GETL…NPKQ, and GRAL…YPGG.

This sequence belongs to the Ycf3 family.

Its subcellular location is the cellular thylakoid membrane. In terms of biological role, essential for the assembly of the photosystem I (PSI) complex. May act as a chaperone-like factor to guide the assembly of the PSI subunits. In Prochlorococcus marinus (strain SARG / CCMP1375 / SS120), this protein is Photosystem I assembly protein Ycf3.